Here is a 507-residue protein sequence, read N- to C-terminus: RNA demethylase ALKBH9B (507 aa).

Disordered stretches follow at residues Gly-76–Ser-102 and Gln-145–Asp-183. Positions Asp-89 to Asn-100 are enriched in basic and acidic residues. The segment covering Gln-145–Arg-160 has biased composition (acidic residues). Basic and acidic residues predominate over residues Thr-174–Asp-183. In terms of domain architecture, Fe2OG dioxygenase spans Val-317–Asp-414. Fe cation-binding residues include His-335, Asp-337, and His-396. 2-oxoglutarate is bound at residue Arg-405. The interval Glu-432 to Gly-507 is disordered. Residues Arg-440–Leu-450 show a composition bias toward polar residues. Basic residues predominate over residues Gly-497–Gly-507.

Belongs to the alkB family. In terms of assembly, (Microbial infection) Interacts with the capsid protein ORF3b of the alfalfa mosaic virus (AMV). It depends on Fe(2+) as a cofactor.

The protein localises to the cytoplasm. It is found in the P-body. Its subcellular location is the cytoplasmic granule. It catalyses the reaction an N(6)-methyladenosine in mRNA + 2-oxoglutarate + O2 = an adenosine in mRNA + formaldehyde + succinate + CO2. In terms of biological role, dioxygenase that demethylates RNA by oxidative demethylation: specifically demethylates N(6)-methyladenosine (m6A) RNA, the most prevalent internal modification of messenger RNA (mRNA) in higher eukaryotes. Modulates viral infection of the alfalfa mosaic virus (AMV) and the m6A abundance in its genomic RNAs. The protein is RNA demethylase ALKBH9B of Arabidopsis thaliana (Mouse-ear cress).